We begin with the raw amino-acid sequence, 150 residues long: D-aminoacyl-tRNA deacylase (150 aa).

The Gly-cisPro motif, important for rejection of L-amino acids motif lies at 138 to 139 (GP).

It belongs to the DTD family. In terms of assembly, homodimer.

Its subcellular location is the cytoplasm. The catalysed reaction is glycyl-tRNA(Ala) + H2O = tRNA(Ala) + glycine + H(+). The enzyme catalyses a D-aminoacyl-tRNA + H2O = a tRNA + a D-alpha-amino acid + H(+). An aminoacyl-tRNA editing enzyme that deacylates mischarged D-aminoacyl-tRNAs. Also deacylates mischarged glycyl-tRNA(Ala), protecting cells against glycine mischarging by AlaRS. Acts via tRNA-based rather than protein-based catalysis; rejects L-amino acids rather than detecting D-amino acids in the active site. By recycling D-aminoacyl-tRNA to D-amino acids and free tRNA molecules, this enzyme counteracts the toxicity associated with the formation of D-aminoacyl-tRNA entities in vivo and helps enforce protein L-homochirality. The chain is D-aminoacyl-tRNA deacylase from Christiangramia forsetii (strain DSM 17595 / CGMCC 1.15422 / KT0803) (Gramella forsetii).